The sequence spans 463 residues: A-type ATP synthase subunit B (463 aa).

The protein belongs to the ATPase alpha/beta chains family. As to quaternary structure, has multiple subunits with at least A(3), B(3), C, D, E, F, H, I and proteolipid K(x).

Its subcellular location is the cell membrane. Functionally, component of the A-type ATP synthase that produces ATP from ADP in the presence of a proton gradient across the membrane. The B chain is a regulatory subunit. The polypeptide is A-type ATP synthase subunit B (Saccharolobus islandicus (strain Y.N.15.51 / Yellowstone #2) (Sulfolobus islandicus)).